The primary structure comprises 760 residues: ATP-dependent zinc metalloprotease FtsH (760 aa).

The Cytoplasmic portion of the chain corresponds to 1 to 5 (MNRKN). Residues 6–26 (VTRTITAIAVVVLLGWSFFYF) traverse the membrane as a helical segment. Residues 27–110 (SDDTRGYKPV…KVSTVVNQGS (84 aa)) lie on the Extracellular side of the membrane. The helical transmembrane segment at 111 to 131 (ILGELLVYVLPLLLLVGLFVM) threads the bilayer. The Cytoplasmic segment spans residues 132–760 (FSRMQGGARM…EVSRTKPAHG (629 aa)). 203 to 210 (GPPGTGKT) provides a ligand contact to ATP. Histidine 425 contributes to the Zn(2+) binding site. Glutamate 426 is a catalytic residue. Zn(2+) is bound by residues histidine 429 and aspartate 501. The tract at residues 616–760 (DFGGRIPSDK…EVSRTKPAHG (145 aa)) is disordered. Positions 650 to 669 (AFKAAIAQATQAAEAARSDA) are enriched in low complexity. The span at 740–750 (GSDESSAEQDD) shows a compositional bias: acidic residues.

It in the central section; belongs to the AAA ATPase family. The protein in the C-terminal section; belongs to the peptidase M41 family. As to quaternary structure, homohexamer. The cofactor is Zn(2+).

The protein resides in the cell membrane. Acts as a processive, ATP-dependent zinc metallopeptidase for both cytoplasmic and membrane proteins. Plays a role in the quality control of integral membrane proteins. This is ATP-dependent zinc metalloprotease FtsH from Mycobacterium bovis (strain ATCC BAA-935 / AF2122/97).